Here is a 216-residue protein sequence, read N- to C-terminus: Adenylate kinase (216 aa).

Glycine 10–threonine 15 lines the ATP pocket. Residues serine 30–valine 59 form an NMP region. AMP contacts are provided by residues threonine 31, arginine 36, alanine 57–valine 59, glycine 85–arginine 88, and glutamine 92. Residues glycine 126–aspartate 163 are LID. Arginine 127 provides a ligand contact to ATP. The Zn(2+) site is built by cysteine 130 and cysteine 133. Position 136–137 (threonine 136–tyrosine 137) interacts with ATP. Residues cysteine 150 and cysteine 153 each coordinate Zn(2+). Residues arginine 160 and arginine 171 each coordinate AMP. ATP is bound at residue glutamine 199.

Belongs to the adenylate kinase family. In terms of assembly, monomer.

The protein resides in the cytoplasm. It catalyses the reaction AMP + ATP = 2 ADP. It participates in purine metabolism; AMP biosynthesis via salvage pathway; AMP from ADP: step 1/1. Functionally, catalyzes the reversible transfer of the terminal phosphate group between ATP and AMP. Plays an important role in cellular energy homeostasis and in adenine nucleotide metabolism. In Bacillus anthracis (strain A0248), this protein is Adenylate kinase.